Here is a 388-residue protein sequence, read N- to C-terminus: Dual-specificity RNA methyltransferase RlmN (388 aa).

Catalysis depends on Glu109, which acts as the Proton acceptor. The 240-residue stretch at 115–354 folds into the Radical SAM core domain; sequence EDDRATLCVS…TIVRKTRGDD (240 aa). Cysteines 122 and 359 form a disulfide. The [4Fe-4S] cluster site is built by Cys129, Cys133, and Cys136. S-adenosyl-L-methionine-binding positions include 183–184, Ser215, 237–239, and Asn316; these read GE and SLH. Cys359 serves as the catalytic S-methylcysteine intermediate.

This sequence belongs to the radical SAM superfamily. RlmN family. The cofactor is [4Fe-4S] cluster.

Its subcellular location is the cytoplasm. The enzyme catalyses adenosine(2503) in 23S rRNA + 2 reduced [2Fe-2S]-[ferredoxin] + 2 S-adenosyl-L-methionine = 2-methyladenosine(2503) in 23S rRNA + 5'-deoxyadenosine + L-methionine + 2 oxidized [2Fe-2S]-[ferredoxin] + S-adenosyl-L-homocysteine. It catalyses the reaction adenosine(37) in tRNA + 2 reduced [2Fe-2S]-[ferredoxin] + 2 S-adenosyl-L-methionine = 2-methyladenosine(37) in tRNA + 5'-deoxyadenosine + L-methionine + 2 oxidized [2Fe-2S]-[ferredoxin] + S-adenosyl-L-homocysteine. Functionally, specifically methylates position 2 of adenine 2503 in 23S rRNA and position 2 of adenine 37 in tRNAs. m2A2503 modification seems to play a crucial role in the proofreading step occurring at the peptidyl transferase center and thus would serve to optimize ribosomal fidelity. The polypeptide is Dual-specificity RNA methyltransferase RlmN (Cronobacter sakazakii (strain ATCC BAA-894) (Enterobacter sakazakii)).